Here is a 199-residue protein sequence, read N- to C-terminus: NAD(P)H dehydrogenase (quinone) (199 aa).

A Flavodoxin-like domain is found at 4–190; the sequence is VLVLYYSAYG…AGARYQGQVI (187 aa). FMN contacts are provided by residues 10–15 and 78–80; these read SAYGHI and TRF. Tyrosine 12 contacts NAD(+). Tryptophan 98 is a binding site for substrate. Residues 113–119 and histidine 134 contribute to the FMN site; that span reads STATQHG.

This sequence belongs to the WrbA family. It depends on FMN as a cofactor.

The enzyme catalyses a quinone + NADH + H(+) = a quinol + NAD(+). It carries out the reaction a quinone + NADPH + H(+) = a quinol + NADP(+). This chain is NAD(P)H dehydrogenase (quinone), found in Rhodopseudomonas palustris (strain BisA53).